A 299-amino-acid chain; its full sequence is Transcription factor srbB (299 aa).

2 disordered regions span residues M1–S33 and I81–K204. Residues P161–P170 are compositionally biased toward low complexity. Positions R188–G199 are enriched in polar residues. The basic motif stretch occupies residues A203–R216. The bHLH domain occupies A203–L264. The interval T217–L264 is helix-loop-helix motif. Residues L254–N281 adopt a coiled-coil conformation.

It is found in the nucleus. Key transcription factors critical for hypoxia adaptation and virulence. Plays a major role in regulation of heme biosynthesis and carbohydrate metabolism early in the response to hypoxia. The protein is Transcription factor srbB of Aspergillus fumigatus (strain ATCC MYA-4609 / CBS 101355 / FGSC A1100 / Af293) (Neosartorya fumigata).